Reading from the N-terminus, the 822-residue chain is Nuclear factor of activated T-cells, cytoplasmic 1 (822 aa).

Residues 110 to 115 (PRIEIT) form a calcineurin-binding region. The transactivation domain A (TAD-A) stretch occupies residues 118 to 210 (LGLHHNNGQF…CVSPKTTDPE (93 aa)). A compositionally biased stretch (polar residues) spans 192–206 (PQTSPWQSPCVSPKT). The segment at 192–289 (PQTSPWQSPC…HSSPRVSVTD (98 aa)) is disordered. 2 repeat units span residues 195 to 211 (SPWQSPCVSPKTTDPEE) and 225 to 241 (SPRHSPSTSPRTSVTEE). Positions 195–290 (SPWQSPCVSP…SSPRVSVTDD (96 aa)) are 3 X SP repeats. Phosphoserine occurs at positions 225 and 229. The segment covering 225–242 (SPRHSPSTSPRTSVTEES) has biased composition (low complexity). Serine 237 is subject to Phosphoserine; by PKA. A Nuclear localization signal motif is present at residues 257 to 259 (KRK). The stretch at 274–290 (SPTPSPHSSPRVSVTDD) is repeat 3. Serine 286 carries the post-translational modification Phosphoserine; by PKA. The short motif at 302–313 (SAIVAAINALST) is the Nuclear export signal element. In terms of domain architecture, RHD spans 400 to 582 (PSLPALDWQL…NPIECSQRSA (183 aa)). The DNA-binding element occupies 429–436 (RAHYETEG). The Nuclear localization signal motif lies at 672–674 (KRK). The interval 772-822 (GPGHLGLQRPAGGVLGGQEAPRPGGPHPGAPQLHPLNLSQSIVTRLTEPQP) is disordered. Polar residues predominate over residues 808-822 (NLSQSIVTRLTEPQP).

In terms of assembly, member of the multicomponent NFATC transcription complex that consists of at least two components, a pre-existing cytoplasmic component NFATC2 and an inducible nuclear component NFATC1. Other members such as NFATC4, NFATC3 or members of the activating protein-1 family, MAF, GATA4 and Cbp/p300 can also bind the complex. NFATC proteins bind to DNA as monomers. Interacts with HOMER2 and HOMER3; this interaction may compete with calcineurin/PPP3CA-binding and hence prevent NFATC1 dephosphorylation and activation. Interacts with TLE6/GRG6. Phosphorylated by NFATC-kinase and GSK3B; phosphorylation induces NFATC1 nuclear exit and dephosphorylation by calcineurin promotes nuclear import. Phosphorylation by PKA and DYRK2 negatively modulates nuclear accumulation, and promotes subsequent phosphorylation by GSK3B or casein kinase 1.

Its subcellular location is the cytoplasm. It is found in the nucleus. In terms of biological role, plays a role in the inducible expression of cytokine genes in T-cells, especially in the induction of the IL-2 or IL-4 gene transcription. Also controls gene expression in embryonic cardiac cells. Could regulate not only the activation and proliferation but also the differentiation and programmed death of T-lymphocytes as well as lymphoid and non-lymphoid cells. Required for osteoclastogenesis and regulates many genes important for osteoclast differentiation and function. The polypeptide is Nuclear factor of activated T-cells, cytoplasmic 1 (NFATC1) (Sus scrofa (Pig)).